The chain runs to 466 residues: Dihydrolipoyl dehydrogenase (466 aa).

FAD-binding positions include 34-42, Lys-51, and Gly-114; that span reads ERVHLGGIC. An intrachain disulfide couples Cys-42 to Cys-47. NAD(+) contacts are provided by residues 180 to 184, Glu-203, and 269 to 272; these read GSGAI and AIGV. FAD contacts are provided by Asp-311 and Ala-319. His-445 serves as the catalytic Proton acceptor.

This sequence belongs to the class-I pyridine nucleotide-disulfide oxidoreductase family. In terms of assembly, homodimer. FAD serves as cofactor.

It localises to the cytoplasm. The enzyme catalyses N(6)-[(R)-dihydrolipoyl]-L-lysyl-[protein] + NAD(+) = N(6)-[(R)-lipoyl]-L-lysyl-[protein] + NADH + H(+). In terms of biological role, lipoamide dehydrogenase is a component of the alpha-ketoacid dehydrogenase complexes. The polypeptide is Dihydrolipoyl dehydrogenase (lpd) (Zymomonas mobilis subsp. mobilis (strain ATCC 31821 / ZM4 / CP4)).